Here is an 800-residue protein sequence, read N- to C-terminus: DNA topoisomerase 1 (800 aa).

A Toprim domain is found at Met-1–Val-111. Residues Glu-7 and Asp-80 each contribute to the Mg(2+) site. A Topo IA-type catalytic domain is found at Asp-132–Glu-568. The interval Ser-166–Gln-171 is interaction with DNA. Tyr-304 acts as the O-(5'-phospho-DNA)-tyrosine intermediate in catalysis. The C4-type zinc-finger motif lies at Cys-600–Cys-627.

Belongs to the type IA topoisomerase family. In terms of assembly, monomer. Mg(2+) is required as a cofactor.

The catalysed reaction is ATP-independent breakage of single-stranded DNA, followed by passage and rejoining.. Releases the supercoiling and torsional tension of DNA, which is introduced during the DNA replication and transcription, by transiently cleaving and rejoining one strand of the DNA duplex. Introduces a single-strand break via transesterification at a target site in duplex DNA. The scissile phosphodiester is attacked by the catalytic tyrosine of the enzyme, resulting in the formation of a DNA-(5'-phosphotyrosyl)-enzyme intermediate and the expulsion of a 3'-OH DNA strand. The free DNA strand then undergoes passage around the unbroken strand, thus removing DNA supercoils. Finally, in the religation step, the DNA 3'-OH attacks the covalent intermediate to expel the active-site tyrosine and restore the DNA phosphodiester backbone. The protein is DNA topoisomerase 1 of Rickettsia bellii (strain RML369-C).